We begin with the raw amino-acid sequence, 468 residues long: Phenylalanine--tRNA ligase alpha subunit (468 aa).

L-phenylalanine-binding positions include Thr311, 350 to 352 (QLD), and Phe390. Glu392 contributes to the Mg(2+) binding site.

It belongs to the class-II aminoacyl-tRNA synthetase family. Phe-tRNA synthetase alpha subunit type 2 subfamily. Tetramer of two alpha and two beta subunits. The cofactor is Mg(2+).

The protein resides in the cytoplasm. It catalyses the reaction tRNA(Phe) + L-phenylalanine + ATP = L-phenylalanyl-tRNA(Phe) + AMP + diphosphate + H(+). This chain is Phenylalanine--tRNA ligase alpha subunit, found in Saccharolobus solfataricus (strain ATCC 35092 / DSM 1617 / JCM 11322 / P2) (Sulfolobus solfataricus).